Reading from the N-terminus, the 863-residue chain is Protein translocase subunit SecA (863 aa).

Residues Gln-88, 106–110, and Asp-507 each bind ATP; that span reads GEGKT. Residues 806–863 form a disordered region; that stretch reads KSHEQNEQFLSNTTESGVNENGEAQITKVPRNSPCPCGSGKKYKECHGKSGPKKGILA. Residues 812–829 are compositionally biased toward polar residues; it reads EQFLSNTTESGVNENGEA. The Zn(2+) site is built by Cys-840, Cys-842, Cys-851, and His-852.

Belongs to the SecA family. As to quaternary structure, monomer and homodimer. Part of the essential Sec protein translocation apparatus which comprises SecA, SecYEG and auxiliary proteins SecDF-YajC and YidC. Zn(2+) serves as cofactor.

Its subcellular location is the cell inner membrane. The protein resides in the cytoplasm. The enzyme catalyses ATP + H2O + cellular proteinSide 1 = ADP + phosphate + cellular proteinSide 2.. In terms of biological role, part of the Sec protein translocase complex. Interacts with the SecYEG preprotein conducting channel. Has a central role in coupling the hydrolysis of ATP to the transfer of proteins into and across the cell membrane, serving as an ATP-driven molecular motor driving the stepwise translocation of polypeptide chains across the membrane. The chain is Protein translocase subunit SecA from Campylobacter lari (strain RM2100 / D67 / ATCC BAA-1060).